A 562-amino-acid chain; its full sequence is MTGAKTNQVDQRPLSITDLLHFIPYDLQQTFLFEAILSYGKIYNLYPIKWVFLIALALFEIGSLICGAAPSSVGLIMGRVVAGIGSGGLFAGAILLVAEFKPLNERAFYNGMLGAMYSVASVAGPLMGGAFTERVTWRLCFYINLPLGVVTAVIVFLLVPNNYDSGRDSRRGLPLKKKLQEMDLYGLVVLVPTIICILLATQWGGTKYSWGNARIIALFVVGFVLFVAFVVIEIWQGDRAIVPPSLVKRRTVWACSIFSFCLFGSFLVVAYFLPLWFQAIKGDTATESGIHNLPSILGTTIFSVAAGGMVFGLGYYTWACILGSVLAAVGAGLLSTLEVDSNAAKWIGYQVLYGAGCGFGLNQPLIAIQAALPDFQKSEGTAVVIFMQTFGGTIAIAVAQNVFNNKLVSNILAAGIPVDPAALLSVGATKLQGLVQPQFFGRLQLAYNDSITQTFYVAVATAGLSMAGSILIPWLSVKQAVAPEDAETANTVMPFQHPSSDVDLAMPAILRQSGEIASEDSQSSDIEKVPRNNEVSTYDSQTSEVEKSSVGSTNRKVESIRN.

A run of 11 helical transmembrane segments spans residues 50 to 70 (WVFLIALALFEIGSLICGAAP), 80 to 100 (VVAGIGSGGLFAGAILLVAEF), 111 to 131 (GMLGAMYSVASVAGPLMGGAF), 139 to 159 (LCFYINLPLGVVTAVIVFLLV), 184 to 204 (LYGLVVLVPTIICILLATQWG), 215 to 235 (IIALFVVGFVLFVAFVVIEIW), 257 to 277 (IFSFCLFGSFLVVAYFLPLWF), 288 to 308 (SGIHNLPSILGTTIFSVAAGG), 309 to 329 (MVFGLGYYTWACILGSVLAAV), 351 to 371 (VLYGAGCGFGLNQPLIAIQAA), and 383 to 403 (VVIFMQTFGGTIAIAVAQNVF). Asn-448 carries N-linked (GlcNAc...) asparagine glycosylation. A helical transmembrane segment spans residues 455–475 (FYVAVATAGLSMAGSILIPWL). The disordered stretch occupies residues 515-562 (EIASEDSQSSDIEKVPRNNEVSTYDSQTSEVEKSSVGSTNRKVESIRN). The segment covering 533–554 (NEVSTYDSQTSEVEKSSVGSTN) has biased composition (polar residues).

The protein belongs to the major facilitator superfamily. TCR/Tet family.

The protein resides in the cell membrane. MFS-type efflux pump; part of the gene cluster that mediates the biosynthesis of elsinochrome C, a perelyenequinone phytotoxin structurally similar to cercosporin. This Phaeosphaeria nodorum (strain SN15 / ATCC MYA-4574 / FGSC 10173) (Glume blotch fungus) protein is MFS-type efflux pump elcC.